Reading from the N-terminus, the 101-residue chain is uncharacterized protein (101 aa).

An N-terminal signal peptide occupies residues 1 to 25 (MRKKRLLSRISFSSLFLLCGTLLSA). Cysteine 26 carries the N-palmitoyl cysteine lipid modification. Residue cysteine 26 is the site of S-diacylglycerol cysteine attachment.

The protein belongs to the MG439/MG440 family.

The protein resides in the cell membrane. This is an uncharacterized protein from Mycoplasma pneumoniae (strain ATCC 29342 / M129 / Subtype 1) (Mycoplasmoides pneumoniae).